Here is a 98-residue protein sequence, read N- to C-terminus: Small ribosomal subunit protein bS20 (98 aa).

Residues 1 to 12 (MAPKKTTKKGGP) are compositionally biased toward basic residues. Positions 1–20 (MAPKKTTKKGGPQKRPSAEK) are disordered.

It belongs to the bacterial ribosomal protein bS20 family.

Functionally, binds directly to 16S ribosomal RNA. This is Small ribosomal subunit protein bS20 from Chlamydia caviae (strain ATCC VR-813 / DSM 19441 / 03DC25 / GPIC) (Chlamydophila caviae).